Consider the following 270-residue polypeptide: Formamidopyrimidine-DNA glycosylase (270 aa).

Residue P2 is the Schiff-base intermediate with DNA of the active site. The active-site Proton donor is the E3. The active-site Proton donor; for beta-elimination activity is K58. Residues H91, R110, and R151 each contribute to the DNA site. An FPG-type zinc finger spans residues 236–270 (FVYGRGGQPCKVCGTELREVKLGQRASVYCPRCQR). R260 acts as the Proton donor; for delta-elimination activity in catalysis.

The protein belongs to the FPG family. In terms of assembly, monomer. Requires Zn(2+) as cofactor.

The enzyme catalyses Hydrolysis of DNA containing ring-opened 7-methylguanine residues, releasing 2,6-diamino-4-hydroxy-5-(N-methyl)formamidopyrimidine.. The catalysed reaction is 2'-deoxyribonucleotide-(2'-deoxyribose 5'-phosphate)-2'-deoxyribonucleotide-DNA = a 3'-end 2'-deoxyribonucleotide-(2,3-dehydro-2,3-deoxyribose 5'-phosphate)-DNA + a 5'-end 5'-phospho-2'-deoxyribonucleoside-DNA + H(+). Functionally, involved in base excision repair of DNA damaged by oxidation or by mutagenic agents. Acts as a DNA glycosylase that recognizes and removes damaged bases. Has a preference for oxidized purines, such as 7,8-dihydro-8-oxoguanine (8-oxoG). Has AP (apurinic/apyrimidinic) lyase activity and introduces nicks in the DNA strand. Cleaves the DNA backbone by beta-delta elimination to generate a single-strand break at the site of the removed base with both 3'- and 5'-phosphates. This chain is Formamidopyrimidine-DNA glycosylase, found in Pseudomonas putida (strain ATCC 700007 / DSM 6899 / JCM 31910 / BCRC 17059 / LMG 24140 / F1).